The sequence spans 561 residues: 4-coumarate--CoA ligase 3 (561 aa).

ATP-binding residues include S213, S214, G215, T216, T217, and K221. Residues Y263 and S267 each coordinate (E)-4-coumaroyl-AMP. K284 contacts CoA. The segment at 286–355 (EIGALLDLIQ…RRLPQAILGQ (70 aa)) is SBD1. Residues A333, Q355, G356, T360, and M368 each coordinate (E)-4-coumaroyl-AMP. ATP-binding residues include Q355, G356, and T360. The tract at residues 356–423 (GYGMTEAGPV…IRGQQIMKEY (68 aa)) is SBD2. D444 and R459 together coordinate ATP. Positions 461 and 465 each coordinate (E)-4-coumaroyl-AMP. Residues K467 and G468 each contribute to the CoA site. K550 serves as a coordination point for ATP.

It belongs to the ATP-dependent AMP-binding enzyme family. Mg(2+) is required as a cofactor. In terms of tissue distribution, preferentially expressed in leaves, flowers and siliques.

The enzyme catalyses (E)-4-coumarate + ATP + CoA = (E)-4-coumaroyl-CoA + AMP + diphosphate. It carries out the reaction (E)-caffeate + ATP + CoA = (E)-caffeoyl-CoA + AMP + diphosphate. It catalyses the reaction (E)-ferulate + ATP + CoA = (E)-feruloyl-CoA + AMP + diphosphate. The catalysed reaction is (E)-4-coumarate + ATP + H(+) = (E)-4-coumaroyl-AMP + diphosphate. The enzyme catalyses (E)-4-coumaroyl-AMP + CoA = (E)-4-coumaroyl-CoA + AMP + H(+). It carries out the reaction (E)-caffeate + ATP + H(+) = (E)-caffeoyl-AMP + diphosphate. It catalyses the reaction (E)-caffeoyl-AMP + CoA = (E)-caffeoyl-CoA + AMP + H(+). The catalysed reaction is (E)-ferulate + ATP + H(+) = (E)-feruloyl-AMP + diphosphate. The enzyme catalyses (E)-feruloyl-AMP + CoA = (E)-feruloyl-CoA + AMP + H(+). The protein operates within phytoalexin biosynthesis; 3,4',5-trihydroxystilbene biosynthesis; 3,4',5-trihydroxystilbene from trans-4-coumarate: step 1/2. Produces CoA thioesters of a variety of hydroxy- and methoxy-substituted cinnamic acids, which are used to synthesize several phenylpropanoid-derived compounds, including anthocyanins, flavonoids, isoflavonoids, coumarins, lignin, suberin and wall-bound phenolics. Follows a two-step reaction mechanism, wherein the carboxylate substrate first undergoes adenylation by ATP, followed by a thioesterification in the presence of CoA to yield the final CoA thioesters. The polypeptide is 4-coumarate--CoA ligase 3 (Arabidopsis thaliana (Mouse-ear cress)).